The primary structure comprises 839 residues: Phosphatidylinositol-glycan-specific phospholipase D (839 aa).

An N-terminal signal peptide occupies residues 1-23 (MSAFRFWSGLLMLLGFLCPRSSP). Residues asparagine 94, asparagine 271, asparagine 292, asparagine 307, and asparagine 321 are each glycosylated (N-linked (GlcNAc...) asparagine). 7 FG-GAP repeats span residues 365–427 (SSPA…GLPR), 434–496 (KEAH…GQLS), 498–558 (SPNV…YSSR), 562–622 (NVEA…SPGR), 632–692 (QSWF…GSTR), 703–769 (SLLS…TVGD), and 787–839 (QYVL…LGQD). Asparagine 500, asparagine 590, and asparagine 658 each carry an N-linked (GlcNAc...) asparagine glycan.

Belongs to the GPLD1 family. In terms of assembly, monomer. Post-translationally, glycosylated.

It localises to the secreted. It catalyses the reaction a 6-(alpha-D-glucosaminyl)-1-(1,2-diacyl-sn-glycero-3-phospho)-1D-myo-inositol + H2O = 6-(alpha-D-glucosaminyl)-1D-myo-inositol + a 1,2-diacyl-sn-glycero-3-phosphate + H(+). Its function is as follows. This protein hydrolyzes the inositol phosphate linkage in proteins anchored by phosphatidylinositol glycans (GPI-anchor) thus releasing these proteins from the membrane. This is Phosphatidylinositol-glycan-specific phospholipase D (GPLD1) from Bos taurus (Bovine).